Consider the following 245-residue polypeptide: 1-(5-phosphoribosyl)-5-[(5-phosphoribosylamino)methylideneamino] imidazole-4-carboxamide isomerase (245 aa).

The Proton acceptor role is filled by aspartate 7. Aspartate 129 serves as the catalytic Proton donor.

It belongs to the HisA/HisF family.

The protein resides in the cytoplasm. It carries out the reaction 1-(5-phospho-beta-D-ribosyl)-5-[(5-phospho-beta-D-ribosylamino)methylideneamino]imidazole-4-carboxamide = 5-[(5-phospho-1-deoxy-D-ribulos-1-ylimino)methylamino]-1-(5-phospho-beta-D-ribosyl)imidazole-4-carboxamide. The protein operates within amino-acid biosynthesis; L-histidine biosynthesis; L-histidine from 5-phospho-alpha-D-ribose 1-diphosphate: step 4/9. This is 1-(5-phosphoribosyl)-5-[(5-phosphoribosylamino)methylideneamino] imidazole-4-carboxamide isomerase from Escherichia coli O127:H6 (strain E2348/69 / EPEC).